We begin with the raw amino-acid sequence, 366 residues long: Carbamoyl phosphate synthase small chain (366 aa).

The interval 1 to 174 (MQEIPAILVL…GERYTVDNPD (174 aa)) is CPSase. Positions 48, 226, and 228 each coordinate L-glutamine. Residues 178–366 (HVVAFDYGIK…FTELMERLKN (189 aa)) enclose the Glutamine amidotransferase type-1 domain. The active-site Nucleophile is cysteine 256. Positions 257, 260, 298, 300, and 301 each coordinate L-glutamine. Catalysis depends on residues histidine 340 and glutamate 342.

The protein belongs to the CarA family. In terms of assembly, composed of two chains; the small (or glutamine) chain promotes the hydrolysis of glutamine to ammonia, which is used by the large (or ammonia) chain to synthesize carbamoyl phosphate. Tetramer of heterodimers (alpha,beta)4.

It catalyses the reaction hydrogencarbonate + L-glutamine + 2 ATP + H2O = carbamoyl phosphate + L-glutamate + 2 ADP + phosphate + 2 H(+). The enzyme catalyses L-glutamine + H2O = L-glutamate + NH4(+). It functions in the pathway amino-acid biosynthesis; L-arginine biosynthesis; carbamoyl phosphate from bicarbonate: step 1/1. It participates in pyrimidine metabolism; UMP biosynthesis via de novo pathway; (S)-dihydroorotate from bicarbonate: step 1/3. Functionally, small subunit of the glutamine-dependent carbamoyl phosphate synthetase (CPSase). CPSase catalyzes the formation of carbamoyl phosphate from the ammonia moiety of glutamine, carbonate, and phosphate donated by ATP, constituting the first step of 2 biosynthetic pathways, one leading to arginine and/or urea and the other to pyrimidine nucleotides. The small subunit (glutamine amidotransferase) binds and cleaves glutamine to supply the large subunit with the substrate ammonia. In Chlorobaculum tepidum (strain ATCC 49652 / DSM 12025 / NBRC 103806 / TLS) (Chlorobium tepidum), this protein is Carbamoyl phosphate synthase small chain.